The following is a 379-amino-acid chain: Protein RecA (379 aa).

79-86 contacts ATP; sequence GPESSGKT.

It belongs to the RecA family.

It is found in the cytoplasm. Its function is as follows. Can catalyze the hydrolysis of ATP in the presence of single-stranded DNA, the ATP-dependent uptake of single-stranded DNA by duplex DNA, and the ATP-dependent hybridization of homologous single-stranded DNAs. It interacts with LexA causing its activation and leading to its autocatalytic cleavage. This is Protein RecA from Streptococcus uberis (strain ATCC BAA-854 / 0140J).